We begin with the raw amino-acid sequence, 2035 residues long: Envoplakin (2035 aa).

Residues 1–27 (MFKGLSKGSQGKGSPKGSPAKGSPKGS) show a composition bias toward low complexity. Disordered stretches follow at residues 1–37 (MFKG…AATQ) and 63–84 (KLQQ…QETG). The segment at 1–841 (MFKGLSKGSQ…LEPALAVSAP (841 aa)) is globular 1. The tract at residues 12-28 (KGSPKGSPAKGSPKGSP) is 4 X 4 AA tandem repeats of K-G-S-P. Residues 71 to 84 (GEQNQALQHQQETG) show a composition bias toward polar residues. The Spectrin repeat unit spans residues 229–330 (YTHLQGCTKQ…LCICQESQLQ (102 aa)). The tract at residues 400–419 (QEVAPLPQRRNPSKQPLHVD) is disordered. Residues 413–470 (KQPLHVDSICDWDSGEVQLLRGERYTLKDNADPYTWLVQGPGGETKSAPAACLCIPAP) form the SH3 domain. A coiled-coil region spans residues 842–1664 (KRLRVISLQE…EKERTLRDLH (823 aa)). The segment at 842-1674 (KRLRVISLQE…TKVSREELNQ (833 aa)) is central fibrous rod domain. The stretch at 1186 to 1227 (KQKPKVQLQERVSEIFQVLPETEQEIRRLRAQLQETGSKKSG) is one Plectin 1 repeat. S1576 is subject to Phosphoserine. The span at 1607-1631 (KQQKARQLQEEGRLLSQKTESERQK) shows a compositional bias: basic and acidic residues. The interval 1607–1637 (KQQKARQLQEEGRLLSQKTESERQKAAQRSQ) is disordered. Residues 1675-2035 (ETQTRETNLS…SPTLPRSCVR (361 aa)) are globular 2. The stretch at 1679 to 1714 (RETNLSTKICILEPETGNDMSPYEAYKRGVIDRGQY) is one Plectin 2 repeat. The residue at position 1800 (S1800) is a Phosphoserine. 5 Plectin repeats span residues 1819-1856 (FGLT…PITG), 1857-1894 (QKLL…NTST), 1895-1932 (QRLL…QESV), 1933-1970 (LPHL…EDLG), and 1971-2008 (QLLQ…PLSG). Position 2026 is a phosphoserine (S2026).

The protein belongs to the plakin or cytolinker family. May form a homodimer or a heterodimer with PPL.

It is found in the cell junction. It localises to the desmosome. The protein localises to the cornified envelope. The protein resides in the cytoplasm. Its subcellular location is the cytoskeleton. Its function is as follows. Component of the cornified envelope of keratinocytes. May link the cornified envelope to desmosomes and intermediate filaments. The sequence is that of Envoplakin (Evpl) from Mus musculus (Mouse).